Here is a 697-residue protein sequence, read N- to C-terminus: Phosphatase and actin regulator 4-B (697 aa).

Residues 42–67 form an RPEL 1 repeat; that stretch reads EVLERKISMRKPREELVKRGLIVDVP. 2 disordered regions span residues 63–381 and 450–569; these read IVDV…LTLA and LKVP…SKDE. A compositionally biased stretch (basic and acidic residues) spans 189–202; it reads HVPEKTSEKYRPKS. Pro residues-rich tracts occupy residues 317–326 and 370–380; these read PSPPLPPKRA and APNPPVPPLTL. Composition is skewed to acidic residues over residues 454–469, 501–514, and 522–532; these read DDDD…DESL, QEED…DTDS, and EEDEDEEEEET. 2 RPEL repeats span residues 579-604 and 616-641; these read TQLN…QKNE and RRLT…RFNE.

It belongs to the phosphatase and actin regulator family. In terms of assembly, binds ppp1ca and actin.

It localises to the cytoplasm. Its subcellular location is the cell projection. The protein localises to the lamellipodium. Functionally, regulator of protein phosphatase 1 (PP1) required for neural tube and optic fissure closure, and enteric neural crest cell (ENCCs) migration during development. Acts as an activator of PP1. During neural tube closure, localizes to the ventral neural tube and activates PP1, leading to down-regulate cell proliferation within cranial neural tissue and the neural retina. Also acts as a regulator of migration of enteric neural crest cells (ENCCs) by activating PP1, leading to repression of the integrin signaling through the rho/rock pathway. This Xenopus laevis (African clawed frog) protein is Phosphatase and actin regulator 4-B (phactr4-b).